Consider the following 360-residue polypeptide: Alanine racemase (360 aa).

Lys-36 serves as the catalytic Proton acceptor; specific for D-alanine. Lys-36 is subject to N6-(pyridoxal phosphate)lysine. Arg-132 lines the substrate pocket. Residue Tyr-256 is the Proton acceptor; specific for L-alanine of the active site. Met-304 serves as a coordination point for substrate.

This sequence belongs to the alanine racemase family. The cofactor is pyridoxal 5'-phosphate.

The enzyme catalyses L-alanine = D-alanine. The protein operates within amino-acid biosynthesis; D-alanine biosynthesis; D-alanine from L-alanine: step 1/1. In terms of biological role, catalyzes the interconversion of L-alanine and D-alanine. May also act on other amino acids. The sequence is that of Alanine racemase (alr) from Haemophilus influenzae (strain ATCC 51907 / DSM 11121 / KW20 / Rd).